The sequence spans 225 residues: NAD(P)H-quinone oxidoreductase subunit K, chloroplastic (225 aa).

4 residues coordinate [4Fe-4S] cluster: C43, C44, C108, and C139.

It belongs to the complex I 20 kDa subunit family. In terms of assembly, NDH is composed of at least 16 different subunits, 5 of which are encoded in the nucleus. [4Fe-4S] cluster serves as cofactor.

Its subcellular location is the plastid. It localises to the chloroplast thylakoid membrane. It carries out the reaction a plastoquinone + NADH + (n+1) H(+)(in) = a plastoquinol + NAD(+) + n H(+)(out). The enzyme catalyses a plastoquinone + NADPH + (n+1) H(+)(in) = a plastoquinol + NADP(+) + n H(+)(out). NDH shuttles electrons from NAD(P)H:plastoquinone, via FMN and iron-sulfur (Fe-S) centers, to quinones in the photosynthetic chain and possibly in a chloroplast respiratory chain. The immediate electron acceptor for the enzyme in this species is believed to be plastoquinone. Couples the redox reaction to proton translocation, and thus conserves the redox energy in a proton gradient. This chain is NAD(P)H-quinone oxidoreductase subunit K, chloroplastic, found in Oryza nivara (Indian wild rice).